The primary structure comprises 380 residues: Cytochrome b (380 aa).

4 helical membrane-spanning segments follow: residues 34–54 (FGSL…LLAM), 78–99 (WLIR…FLHI), 114–134 (WNTG…GYVL), and 179–199 (FFAL…IHLI). Residues His84 and His98 each coordinate heme b. Heme b is bound by residues His183 and His197. His202 contacts a ubiquinone. Helical transmembrane passes span 227–247 (LKDI…ALFS), 289–309 (LGGV…PFLH), 321–341 (LSQT…WVGS), and 348–368 (FIII…ILFP).

It belongs to the cytochrome b family. The cytochrome bc1 complex contains 11 subunits: 3 respiratory subunits (MT-CYB, CYC1 and UQCRFS1), 2 core proteins (UQCRC1 and UQCRC2) and 6 low-molecular weight proteins (UQCRH/QCR6, UQCRB/QCR7, UQCRQ/QCR8, UQCR10/QCR9, UQCR11/QCR10 and a cleavage product of UQCRFS1). This cytochrome bc1 complex then forms a dimer. Heme b serves as cofactor.

The protein localises to the mitochondrion inner membrane. Its function is as follows. Component of the ubiquinol-cytochrome c reductase complex (complex III or cytochrome b-c1 complex) that is part of the mitochondrial respiratory chain. The b-c1 complex mediates electron transfer from ubiquinol to cytochrome c. Contributes to the generation of a proton gradient across the mitochondrial membrane that is then used for ATP synthesis. This Tragopan temminckii (Temminck's tragopan) protein is Cytochrome b (MT-CYB).